The chain runs to 309 residues: UDP-N-acetylenolpyruvoylglucosamine reductase (309 aa).

In terms of domain architecture, FAD-binding PCMH-type spans 34 to 221 (RVGGPAQVLF…TAAREAAQPI (188 aa)). R179 is a catalytic residue. S228 serves as the catalytic Proton donor. Residue E298 is part of the active site.

Belongs to the MurB family. The cofactor is FAD.

The protein resides in the cytoplasm. It catalyses the reaction UDP-N-acetyl-alpha-D-muramate + NADP(+) = UDP-N-acetyl-3-O-(1-carboxyvinyl)-alpha-D-glucosamine + NADPH + H(+). Its pathway is cell wall biogenesis; peptidoglycan biosynthesis. In terms of biological role, cell wall formation. This is UDP-N-acetylenolpyruvoylglucosamine reductase from Methylorubrum populi (strain ATCC BAA-705 / NCIMB 13946 / BJ001) (Methylobacterium populi).